The following is a 119-amino-acid chain: Large ribosomal subunit protein bL20 (119 aa).

This sequence belongs to the bacterial ribosomal protein bL20 family.

Binds directly to 23S ribosomal RNA and is necessary for the in vitro assembly process of the 50S ribosomal subunit. It is not involved in the protein synthesizing functions of that subunit. This chain is Large ribosomal subunit protein bL20, found in Streptococcus suis (strain 98HAH33).